Reading from the N-terminus, the 89-residue chain is Small ribosomal subunit protein uS15 (89 aa).

It belongs to the universal ribosomal protein uS15 family. As to quaternary structure, part of the 30S ribosomal subunit. Forms a bridge to the 50S subunit in the 70S ribosome, contacting the 23S rRNA.

In terms of biological role, one of the primary rRNA binding proteins, it binds directly to 16S rRNA where it helps nucleate assembly of the platform of the 30S subunit by binding and bridging several RNA helices of the 16S rRNA. Functionally, forms an intersubunit bridge (bridge B4) with the 23S rRNA of the 50S subunit in the ribosome. The sequence is that of Small ribosomal subunit protein uS15 from Chlorobium limicola (strain DSM 245 / NBRC 103803 / 6330).